The sequence spans 643 residues: Phosphomethylpyrimidine synthase (643 aa).

Substrate-binding positions include asparagine 248, methionine 277, tyrosine 306, histidine 342, 362–364 (SRG), 403–406 (DGLR), and glutamate 442. Histidine 446 serves as a coordination point for Zn(2+). Tyrosine 469 lines the substrate pocket. Histidine 510 is a binding site for Zn(2+). Cysteine 590, cysteine 593, and cysteine 598 together coordinate [4Fe-4S] cluster.

This sequence belongs to the ThiC family. In terms of assembly, homodimer. It depends on [4Fe-4S] cluster as a cofactor.

The catalysed reaction is 5-amino-1-(5-phospho-beta-D-ribosyl)imidazole + S-adenosyl-L-methionine = 4-amino-2-methyl-5-(phosphooxymethyl)pyrimidine + CO + 5'-deoxyadenosine + formate + L-methionine + 3 H(+). Its pathway is cofactor biosynthesis; thiamine diphosphate biosynthesis. In terms of biological role, catalyzes the synthesis of the hydroxymethylpyrimidine phosphate (HMP-P) moiety of thiamine from aminoimidazole ribotide (AIR) in a radical S-adenosyl-L-methionine (SAM)-dependent reaction. In Burkholderia mallei (strain NCTC 10247), this protein is Phosphomethylpyrimidine synthase.